The following is a 202-amino-acid chain: Potassium-transporting ATPase KdpC subunit 1 (202 aa).

Residues 17 to 37 (LWVIAAVIYPFFMIAVGQIVF) form a helical membrane-spanning segment.

Belongs to the KdpC family. As to quaternary structure, the system is composed of three essential subunits: KdpA, KdpB and KdpC.

The protein resides in the cell inner membrane. Part of the high-affinity ATP-driven potassium transport (or Kdp) system, which catalyzes the hydrolysis of ATP coupled with the electrogenic transport of potassium into the cytoplasm. This subunit acts as a catalytic chaperone that increases the ATP-binding affinity of the ATP-hydrolyzing subunit KdpB by the formation of a transient KdpB/KdpC/ATP ternary complex. The polypeptide is Potassium-transporting ATPase KdpC subunit 1 (Nostoc sp. (strain PCC 7120 / SAG 25.82 / UTEX 2576)).